The chain runs to 226 residues: N-acetyltransferase family 8 member 3 (226 aa).

The next 2 helical transmembrane spans lie at 36-56 (MLLLPRTLLLLLGVPLTLFLA) and 58-78 (GSWLLVLLSILTLFLSLWFLA). The region spanning 61 to 220 (LLVLLSILTL…PMINLKYSLT (160 aa)) is the N-acetyltransferase domain.

Belongs to the camello family.

Its subcellular location is the nucleus membrane. It is found in the cytoplasm. The protein localises to the perinuclear region. The catalysed reaction is L-lysyl-[protein] + acetyl-CoA = N(6)-acetyl-L-lysyl-[protein] + CoA + H(+). In terms of biological role, has histone acetyltransferase activity in vitro, with specificity for histone H4. The sequence is that of N-acetyltransferase family 8 member 3 from Mus musculus (Mouse).